The following is a 1481-amino-acid chain: Cystic fibrosis transmembrane conductance regulator (1481 aa).

The Cytoplasmic portion of the chain corresponds to 1–77 (MQRSPLEKAS…KLINALRRCF (77 aa)). A helical transmembrane segment spans residues 78 to 98 (FWRFMFYGIILYLGEVTKAVQ). The 285-residue stretch at 81–365 (FMFYGIILYL…WAVQTWYDSL (285 aa)) folds into the ABC transmembrane type-1 1 domain. Topologically, residues 99 to 122 (PLLLGRIIASYDPDNKVERSIAIY) are extracellular. The helical transmembrane segment at 123-146 (LGIGLCLLFIVRTLLLHPAIFGLH) threads the bilayer. Residues 147–195 (HIGMQMRIAMFSLIYKKTLKLSSRVLDKISIGQLVSLLSNNLNKFDEGL) lie on the Cytoplasmic side of the membrane. A helical transmembrane segment spans residues 196-216 (ALAHFVWIAPLQVTLLMGLLW). The Extracellular segment spans residues 217–222 (ELLQAF). A helical transmembrane segment spans residues 223-243 (TFCGLAFLVVLAFLQAGLGKM). The Cytoplasmic portion of the chain corresponds to 244-298 (MMKYRDQRAGKINERLVITSEIIENIQSVKAYCWEEAMEKIIENLRQTELKLTRK). A helical transmembrane segment spans residues 299–319 (AAYVRYLNSSAFFFSGFFVVF). The Extracellular portion of the chain corresponds to 320-339 (LSVLPYALLKGIILRKIFTT). A helical transmembrane segment spans residues 340 to 358 (ISFCIVLRMAVTRQFPWAV). Topologically, residues 359-858 (QTWYDSLGAI…YLRYITVHKS (500 aa)) are cytoplasmic. ATP is bound by residues tryptophan 401, 457–464 (GSTGAGKT), and glutamine 492. The region spanning 423–645 (NGDNNLFFSN…RPDFSSKLMG (223 aa)) is the ABC transporter 1 domain. Cysteine 523 carries S-palmitoyl cysteine lipidation. A phosphoserine mark is found at serine 548 and serine 659. The disordered R region stretch occupies residues 653–831 (TAERRNSIIT…EEINEEDLRD (179 aa)). Serine 669 carries the phosphoserine; by PKA modification. Serine 685 carries the phosphoserine modification. Residue lysine 687 forms a Glycyl lysine isopeptide (Lys-Gly) (interchain with G-Cter in ubiquitin) linkage. Phosphoserine is present on residues serine 699 and serine 711. The residue at position 716 (threonine 716) is a Phosphothreonine. Phosphoserine occurs at positions 736, 767, 790, 795, and 813. The helical transmembrane segment at 859–879 (LMFVLIWCLVVFLAEVAASLV) threads the bilayer. The ABC transmembrane type-1 2 domain occupies 859-1155 (LMFVLIWCLV…AVNSSIDVDS (297 aa)). Topologically, residues 880 to 918 (VLCLFPKILFQDKGNSTKSANNSYAVIITSTSSYYIFYI) are extracellular. Residues asparagine 894 and asparagine 900 are each glycosylated (N-linked (GlcNAc...) asparagine). Residues 919–939 (YVGVADTLLALGLFRGLPLVH) traverse the membrane as a discontinuously helical segment. The Cytoplasmic portion of the chain corresponds to 940–990 (TLITVSKTLHHKMLQSVLQAPMSTLNTLKTGGILNRFSKDIAVLDDLLPLT). A helical transmembrane segment spans residues 991-1011 (IFDFVQLLLIVIGAVVVVSVL). Residues 1012-1013 (QP) are Extracellular-facing. Residues 1014–1034 (YIFLATVPVIAAFILLRAYFL) form a helical membrane-spanning segment. Residues 1035-1095 (HTSQQLKQLE…TANWFLYLST (61 aa)) are Cytoplasmic-facing. Residues 1096–1116 (LRWFQMRIEMIFVIFFIAVTF) form a helical membrane-spanning segment. At 1117–1130 (ISILTTGEGEGRVG) the chain is on the extracellular side. A helical transmembrane segment spans residues 1131-1151 (IILTLAMNIMGTLQWAVNSSI). Residues 1152 to 1481 (DVDSLMRSVS…TEEEVQETKL (330 aa)) are Cytoplasmic-facing. One can recognise an ABC transporter 2 domain in the interval 1211–1444 (MTVKDLTAKY…KSLFRQAISP (234 aa)). ATP contacts are provided by residues tyrosine 1220 and 1245–1252 (GRTGSGKS). An interaction with GORASP2 region spans residues 1387-1481 (RTLKQAFADC…TEEEVQETKL (95 aa)). Cysteine 1396 carries the S-palmitoyl cysteine lipid modification. Residues 1452–1481 (PQRNSSRQKSRSNIAALKEETEEEVQETKL) are disordered. The segment covering 1453–1464 (QRNSSRQKSRSN) has biased composition (low complexity). Serine 1457 bears the Phosphoserine mark. Acidic residues predominate over residues 1471–1481 (ETEEEVQETKL). The PDZ-binding motif lies at 1479–1481 (TKL).

The protein belongs to the ABC transporter superfamily. ABCC family. CFTR transporter (TC 3.A.1.202) subfamily. Monomer; does not require oligomerization for channel activity. May form oligomers in the membrane. Interacts with SLC26A3, SLC26A6 and NHERF1. Interacts with SHANK2. Interacts with MYO6. Interacts (via C-terminus) with GOPC (via PDZ domain); this promotes CFTR internalization and thereby decreases channel activity. Interacts with SLC4A7 through NHERF1. Found in a complex with MYO5B and RAB11A. Interacts with ANO1. Interacts with SLC26A8. Interacts with AHCYL1; the interaction increases CFTR activity. Interacts with CSE1L. The core-glycosylated form interacts with GORASP2 (via PDZ GRASP-type 1 domain) in respone to ER stress. Interacts with MARCHF2; the interaction leads to CFTR ubiqtuitination and degradation. Interacts with ADGRG2. In terms of processing, N-glycosylated. Post-translationally, phosphorylated; cAMP treatment promotes phosphorylation and activates the channel. Dephosphorylation decreases the ATPase activity (in vitro). Phosphorylation at PKA sites activates the channel. Phosphorylation at PKC sites enhances the response to phosphorylation by PKA. Phosphorylated by AMPK; this inhibits channel activity. Ubiquitinated, leading to its degradation in the lysosome. Deubiquitination by USP10 in early endosomes enhances its endocytic recycling to the cell membrane. Ubiquitinated by RNF185 during ER stress. Ubiquitinated by MARCHF2.

It is found in the apical cell membrane. It localises to the early endosome membrane. The protein resides in the cell membrane. Its subcellular location is the recycling endosome membrane. The protein localises to the endoplasmic reticulum membrane. It is found in the nucleus. The enzyme catalyses ATP + H2O + closed Cl(-) channel = ADP + phosphate + open Cl(-) channel.. The catalysed reaction is chloride(in) = chloride(out). It carries out the reaction hydrogencarbonate(in) = hydrogencarbonate(out). It catalyses the reaction ATP + H2O = ADP + phosphate + H(+). Epithelial ion channel that plays an important role in the regulation of epithelial ion and water transport and fluid homeostasis. Mediates the transport of chloride ions across the cell membrane. Possesses an intrinsic ATPase activity and utilizes ATP to gate its channel; the passive flow of anions through the channel is gated by cycles of ATP binding and hydrolysis by the ATP-binding domains. The ion channel is also permeable to HCO(3)(-); selectivity depends on the extracellular chloride concentration. Exerts its function also by modulating the activity of other ion channels and transporters. Contributes to the regulation of the pH and the ion content of the epithelial fluid layer. Modulates the activity of the epithelial sodium channel (ENaC) complex, in part by regulating the cell surface expression of the ENaC complex. May regulate bicarbonate secretion and salvage in epithelial cells by regulating the transporter SLC4A7. Can inhibit the chloride channel activity of ANO1. Plays a role in the chloride and bicarbonate homeostasis during sperm epididymal maturation and capacitation. This is Cystic fibrosis transmembrane conductance regulator from Muntiacus muntjak (Barking deer).